The following is a 780-amino-acid chain: MTHEEHHATKTLGIGKAIAVLTSGGDAQGMNAAVRAVVRVGIFTGARVFFVHEGYQGLVDGGDHIKEATWESVSMMLQLGGTVIGSARCKDFREREGRLRAAYNLVKRGITNLCVIGGDGSLTGADTFRSEWSDLLSDLQKAGKITDEEATKSSYLNIVGLVGSIDNDFCGTDMTIGTDSALHRIIEIVDAITTTAQSHQRTIVLEVMGRHCGYLALVTSLSCGADWVFIPECPPDDDWEEHLCRRLSETRTRGSRLNIIIVAEGAIDKNGKPITSEDIKNLVVKRLGYDTRVTVLGHVQRGGTPSAFDRILGSRMGVEAVMALLEGTPDTPACVVSLSGNQAVRLPLMECVQVTKDVTKAMDEKKFDEALKLRGRSFMNNWEVYKLLAHVRPPVSKSGSHTVAVMNVGAPAAGMNAAVRSTVRIGLIQGNRVLVVHDGFEGLAKGQIEEAGWSYVGGWTGQGGSKLGTKRTLPKKSFEQISANITKFNIQGLVIIGGFEAYTGGLELMEGRKQFDELCIPFVVIPATVSNNVPGSDFSVGADTALNTICTTCDRIKQSAAGTKRRVFIIETMGGYCGHLATMAGLAAGADAAYIFGEPFTIRDLQANVEHLVQKMKTTVKRGLVLRNEKCNENYTTDFIFNLYSEEGKGIFDSRKNVLGHMQQGGSPTPFDRNFATKMGAKAMNWMSGKIKESYRNGRIFANTPDSGCVLGMRKRALVFQPVAELKDQTDFEHRIPKEQWWLKLRPILKILAKYEIDLDTSDHAHLEHITRKRSGEAAV.

The residue at position 2 (T2) is an N-acetylthreonine. An N-terminal catalytic PFK domain 1 region spans residues 2–390 (THEEHHATKT…NWEVYKLLAH (389 aa)). ATP contacts are provided by residues G25, 88–89 (RC), and 118–121 (GDGS). D119 provides a ligand contact to Mg(2+). S133 carries the post-translational modification Phosphoserine. Residues 164-166 (SID), R201, 208-210 (MGR), E264, R292, and 298-301 (HVQR) each bind substrate. Residue D166 is the Proton acceptor of the active site. At S377 the chain carries Phosphoserine. The tract at residues 391-401 (VRPPVSKSGSH) is interdomain linker. Positions 402–780 (TVAVMNVGAP…TRKRSGEAAV (379 aa)) are C-terminal regulatory PFK domain 2. Beta-D-fructose 2,6-bisphosphate contacts are provided by residues R471 and 528–532 (TVSNN). S530 carries an O-linked (GlcNAc) serine glycan. The residue at position 557 (K557) is an N6-(2-hydroxyisobutyryl)lysine. Residues R566, 573–575 (MGG), E629, R655, and 661–664 (HMQQ) each bind beta-D-fructose 2,6-bisphosphate. The residue at position 667 (S667) is a Phosphoserine. R735 contributes to the beta-D-fructose 2,6-bisphosphate binding site. Position 775 is a phosphoserine (S775).

It belongs to the phosphofructokinase type A (PFKA) family. ATP-dependent PFK group I subfamily. Eukaryotic two domain clade 'E' sub-subfamily. In terms of assembly, homo- and heterotetramers. Phosphofructokinase (PFK) enzyme functions as a tetramer composed of different combinations of 3 types of subunits, called PFKM (M), PFKL (L) and PFKP (P). The composition of the PFK tetramer differs according to the tissue type it is present in. The kinetic and regulatory properties of the tetrameric enzyme are dependent on the subunit composition, hence can vary across tissues. Interacts (via C-terminus) with HK1 (via N-terminal spermatogenic cell-specific region). Mg(2+) is required as a cofactor. In terms of processing, glcNAcylation decreases enzyme activity.

It is found in the cytoplasm. It catalyses the reaction beta-D-fructose 6-phosphate + ATP = beta-D-fructose 1,6-bisphosphate + ADP + H(+). The protein operates within carbohydrate degradation; glycolysis; D-glyceraldehyde 3-phosphate and glycerone phosphate from D-glucose: step 3/4. Allosterically activated by ADP, AMP, or fructose 2,6-bisphosphate, and allosterically inhibited by ATP or citrate. Functionally, catalyzes the phosphorylation of D-fructose 6-phosphate to fructose 1,6-bisphosphate by ATP, the first committing step of glycolysis. The sequence is that of ATP-dependent 6-phosphofructokinase, muscle type (PFKM) from Pongo abelii (Sumatran orangutan).